The primary structure comprises 200 residues: Ciliary neurotrophic factor (200 aa).

This sequence belongs to the CNTF family. In terms of tissue distribution, nervous system.

It localises to the cytoplasm. In terms of biological role, CNTF is a survival factor for various neuronal cell types. Seems to prevent the degeneration of motor axons after axotomy. The chain is Ciliary neurotrophic factor (Cntf) from Rattus norvegicus (Rat).